A 313-amino-acid polypeptide reads, in one-letter code: WD repeat-containing protein 82-B (313 aa).

WD repeat units lie at residues 19-58 (ENSD…PKRT), 105-144 (GHSK…CQGL), 146-184 (HLQG…KGPF), 192-231 (DRTC…VMHT), 236-276 (NNSK…KVAV), and 280-313 (KHTG…TIDD).

This sequence belongs to the WD repeat SWD2 family. Component of the SET1/COMPASS complex. Component of the PNUTS-PP1 phosphatase complex.

The protein localises to the nucleus. It is found in the chromosome. The protein resides in the cytoplasm. In terms of biological role, regulatory component of the SET1/COMPASS complex implicated in the tethering of this complex to transcriptional start sites of active genes. Facilitates histone H3 'Lys-4' methylation (H3K4me) via recruitment of the SETD1A or SETD1B to the 'Ser-5' phosphorylated C-terminal domain (CTD) of RNA polymerase II large subunit (POLR2A). Component of the PNUTS-PP1 protein phosphatase complex, a protein phosphatase 1 (PP1) complex that promotes RNA polymerase II transcription pause-release, allowing transcription elongation. This chain is WD repeat-containing protein 82-B (wdr82-b), found in Xenopus laevis (African clawed frog).